The sequence spans 410 residues: Demethyl-4-deoxygadusol synthase (410 aa).

Residues 56–58 (DAN), 87–90 (EPDK), 119–123 (GLITD), 143–144 (TT), K156, K165, and 183–186 (LLRT) contribute to the NAD(+) site. Zn(2+) is bound by residues E198, H271, and H287.

Belongs to the sugar phosphate cyclases superfamily. DDGS family. Homodimer. It depends on NAD(+) as a cofactor. Co(2+) serves as cofactor. Zn(2+) is required as a cofactor.

It carries out the reaction D-sedoheptulose 7-phosphate = (R)-demethyl-4-deoxygadusol + phosphate + H2O + H(+). Its function is as follows. Catalyzes the conversion of sedoheptulose 7-phosphate to demethyl-4-deoxygadusol (DDG). Involved in the synthesis of the mycosporine-like amino acid shinorine, a natural sunscreen compound that protects the cell against UV radiation. In Trichormus variabilis (strain ATCC 29413 / PCC 7937) (Anabaena variabilis), this protein is Demethyl-4-deoxygadusol synthase.